The following is a 246-amino-acid chain: Ribonuclease PH (246 aa).

Phosphate is bound by residues arginine 91 and glycine 129 to arginine 131.

The protein belongs to the RNase PH family. Homohexameric ring arranged as a trimer of dimers.

The enzyme catalyses tRNA(n+1) + phosphate = tRNA(n) + a ribonucleoside 5'-diphosphate. Its function is as follows. Phosphorolytic 3'-5' exoribonuclease that plays an important role in tRNA 3'-end maturation. Removes nucleotide residues following the 3'-CCA terminus of tRNAs; can also add nucleotides to the ends of RNA molecules by using nucleoside diphosphates as substrates, but this may not be physiologically important. Probably plays a role in initiation of 16S rRNA degradation (leading to ribosome degradation) during starvation. The protein is Ribonuclease PH of Burkholderia vietnamiensis (strain G4 / LMG 22486) (Burkholderia cepacia (strain R1808)).